The following is a 447-amino-acid chain: MLSTMSPRLSLLLLWLLLLINAAHPVGALPRLCDVRRVLLEERAECLRELSEEKKALGPKTASGCERFWDNMSCWPSSALAQTVEVPCPKFLRMFSGRNGSLFRNCTKDGWSETFPRPDLACGVNMNGSFNERRHAYLLKLKVMYTVGYSSSLAMLLVALSILCSFRRLHCTRNYIHMHLFVSFILRALSNFIKDAVLFPADDVTYCDAHRAGCKLVMIFFQYCIMANYAWLLVEGLYLHTLLAISFFSERKCLQAFVLFGWGSPAIFVALWAVTRHFLEDFGCWDINSNASIWWVIRGPVILSIVINFIFFINILRILMRKLRTQETRGNETHHYKRLAKSTLLLIPLFGIHYIVFAFSPEGAMEVQLFFELALGSFQGLVVAVLYCFLNGELEVQKKWRQWHLQEFPLRPVALSNSFSNATNGPTHSTKAGTSEQSRSIPGANVI.

The first 28 residues, 1 to 28 (MLSTMSPRLSLLLLWLLLLINAAHPVGA), serve as a signal peptide directing secretion. The Extracellular segment spans residues 29–140 (LPRLCDVRRV…NERRHAYLLK (112 aa)). 3 disulfide bridges follow: C46–C74, C65–C106, and C88–C122. Residues N71, N99, N105, and N127 are each glycosylated (N-linked (GlcNAc...) asparagine). The chain crosses the membrane as a helical span at residues 141-166 (LKVMYTVGYSSSLAMLLVALSILCSF). Residues 167-173 (RRLHCTR) are Cytoplasmic-facing. A helical transmembrane segment spans residues 174 to 194 (NYIHMHLFVSFILRALSNFIK). The Extracellular portion of the chain corresponds to 195 to 215 (DAVLFPADDVTYCDAHRAGCK). The cysteines at positions 214 and 284 are disulfide-linked. Residues 216-238 (LVMIFFQYCIMANYAWLLVEGLY) traverse the membrane as a helical segment. Residues 239-253 (LHTLLAISFFSERKC) lie on the Cytoplasmic side of the membrane. The helical transmembrane segment at 254 to 275 (LQAFVLFGWGSPAIFVALWAVT) threads the bilayer. The Extracellular portion of the chain corresponds to 276-290 (RHFLEDFGCWDINSN). N290 is a glycosylation site (N-linked (GlcNAc...) asparagine). Residues 291 to 314 (ASIWWVIRGPVILSIVINFIFFIN) traverse the membrane as a helical segment. Residues 315–339 (ILRILMRKLRTQETRGNETHHYKRL) lie on the Cytoplasmic side of the membrane. The helical transmembrane segment at 340-355 (AKSTLLLIPLFGIHYI) threads the bilayer. The Extracellular portion of the chain corresponds to 356–366 (VFAFSPEGAME). A helical membrane pass occupies residues 367 to 390 (VQLFFELALGSFQGLVVAVLYCFL). Residues 391–447 (NGELEVQKKWRQWHLQEFPLRPVALSNSFSNATNGPTHSTKAGTSEQSRSIPGANVI) lie on the Cytoplasmic side of the membrane. The span at 423-440 (TNGPTHSTKAGTSEQSRS) shows a compositional bias: polar residues. The interval 423-447 (TNGPTHSTKAGTSEQSRSIPGANVI) is disordered.

The protein belongs to the G-protein coupled receptor 2 family. Phosphorylated on Ser and Thr residues at the cytoplasmic C-terminus by G protein-coupled receptor kinases (GRKs). As to expression, in brain, expressed in the hippocampal CA1 region, the lower layer of cerebral cortex, the anterior olfactory nuclei, the anterior ventrolateral thalamus, the lateral region of hypothalamus, substantia nigra, tegmental area and central nucleus of the inferior colliculus, the ventral supramamillary nucleus and the cerebellum. Expressed in brown adipocytes: expression predominates in mature brown adipocytes (at protein level). Detected in the renal medulla, where it localized predominantly on the basolateral membranes of cells in the collecting ducts (blue arrow) and the ascending thick segments of the loop of Henle.

The protein localises to the cell membrane. It localises to the basolateral cell membrane. G protein-coupled receptor activated by secretin (SCT), which is involved in different processes such as regulation of the pH of the duodenal content, food intake and water homeostasis. Ligand binding causes a conformation change that triggers signaling via guanine nucleotide-binding proteins (G proteins) and activates cAMP-dependent pathway. Upon binding to secretin, regulates the pH of the duodenum by (1) inhibiting the secretion of gastric acid from the parietal cells of the stomach and (2) stimulating the production of bicarbonate (NaHCO(3)) from the ductal cells of the pancreas. In addition to regulating the pH of the duodenal content, plays a central role in diet induced thermogenesis: acts as a non-sympathetic brown fat (BAT) activator mediating prandial thermogenesis, which consequentially induces satiation. Mechanistically, secretin released by the gut after a meal binds to secretin receptor (SCTR) in brown adipocytes, activating brown fat thermogenesis by stimulating lipolysis, which is sensed in the brain and promotes satiation. Also able to stimulate lipolysis in white adipocytes. Also plays an important role in cellular osmoregulation by regulating renal water reabsorption. Also plays a role in the central nervous system: required for synaptic plasticity. The protein is Secretin receptor of Mus musculus (Mouse).